Here is a 400-residue protein sequence, read N- to C-terminus: Na(+)/H(+) antiporter NhaA (400 aa).

Helical transmembrane passes span 26 to 46, 71 to 91, 107 to 127, 137 to 157, 166 to 186, 189 to 209, 212 to 232, 233 to 253, 273 to 293, 299 to 319, 340 to 360, and 373 to 393; these read AGGILLLFSAVVAMLLANSPL, LIHWINDGFMAVFFVLVGMEV, IFPAIAAIGGMVIPAVVYWFI, GWAIPMATDIAFALGIMALLS, IFLLALAIIDDLGAIVVIALF, HGLSVQALIFSAVAIIALILL, FKVSALCAYMVVGAILWASVL, KSGVHATLAGVIIGFSIPLKG, FVILPLFAFANAGVSFAGIDV, PLLLAIASGLIIGKPVGIFGF, IFAVAVLCGIGFTMSMFLASL, and LSRLGILLGSTVSAILGYLFL.

The protein belongs to the NhaA Na(+)/H(+) (TC 2.A.33) antiporter family.

The protein localises to the cell inner membrane. It catalyses the reaction Na(+)(in) + 2 H(+)(out) = Na(+)(out) + 2 H(+)(in). Functionally, na(+)/H(+) antiporter that extrudes sodium in exchange for external protons. This Haemophilus influenzae (strain PittGG) protein is Na(+)/H(+) antiporter NhaA.